The primary structure comprises 250 residues: Uracil-DNA glycosylase (250 aa).

The active-site Proton acceptor is the Asp78. The tract at residues 228 to 250 (RGQKPVDWSGEQNNASRQGEFAL) is disordered.

The protein belongs to the uracil-DNA glycosylase (UDG) superfamily. UNG family.

The protein localises to the cytoplasm. It carries out the reaction Hydrolyzes single-stranded DNA or mismatched double-stranded DNA and polynucleotides, releasing free uracil.. Excises uracil residues from the DNA which can arise as a result of misincorporation of dUMP residues by DNA polymerase or due to deamination of cytosine. This Bordetella parapertussis (strain 12822 / ATCC BAA-587 / NCTC 13253) protein is Uracil-DNA glycosylase.